The primary structure comprises 511 residues: Probable Xaa-Pro aminopeptidase MAA_08947 (511 aa).

Mn(2+)-binding residues include aspartate 275, aspartate 286, glutamate 439, and glutamate 480.

It belongs to the peptidase M24B family. Requires Mn(2+) as cofactor.

It catalyses the reaction Release of any N-terminal amino acid, including proline, that is linked to proline, even from a dipeptide or tripeptide.. Its function is as follows. Catalyzes the removal of a penultimate prolyl residue from the N-termini of peptides. This chain is Probable Xaa-Pro aminopeptidase MAA_08947, found in Metarhizium robertsii (strain ARSEF 23 / ATCC MYA-3075) (Metarhizium anisopliae (strain ARSEF 23)).